Reading from the N-terminus, the 345-residue chain is Class I histocompatibility antigen, F10 alpha chain (345 aa).

Residues 1–22 form the signal peptide; it reads MGPCGALGLGLLLAAVCGAAAP. The tract at residues 23 to 110 is alpha-1; sequence ELHTLRYIQT…ILQRRYNQTG (88 aa). The Extracellular segment spans residues 23 to 301; the sequence is ELHTLRYIQT…WEPPQPNLVP (279 aa). 2 N-linked (GlcNAc...) asparagine glycosylation sites follow: asparagine 59 and asparagine 107. Residues 111-201 form an alpha-2 region; sequence GSHTVQWMYG…EYGKAELGRR (91 aa). 2 disulfide bridges follow: cysteine 121-cysteine 183 and cysteine 221-cysteine 277. The segment at 202 to 292 is alpha-3; sequence ERPEVRVWGK…SLPQPGLYSW (91 aa). Residues 204–293 form the Ig-like C1-type domain; that stretch reads PEVRVWGKEA…LPQPGLYSWE (90 aa). Positions 293-301 are connecting peptide; that stretch reads EPPQPNLVP. Residues 302–324 form a helical membrane-spanning segment; sequence IVAGVAVAIVAIAIMVGVGFIIY. Topologically, residues 325-345 are cytoplasmic; that stretch reads RRHAGKKGKGYNIAPGSNPAI.

This sequence belongs to the MHC class I family. Heterodimer of an alpha chain and a beta chain (beta-2-microglobulin).

The protein resides in the membrane. Its function is as follows. Involved in the presentation of foreign antigens to the immune system. The polypeptide is Class I histocompatibility antigen, F10 alpha chain (Gallus gallus (Chicken)).